A 291-amino-acid chain; its full sequence is Probable cell wall amidase LytH (291 aa).

The first 40 residues, 1–40, serve as a signal peptide directing secretion; it reads MKKIDSWLTKHGLKNRLTLVVIVIFIIFLILLFMFVNLSD. The region spanning 41 to 105 is the SH3b domain; that stretch reads EDTGQITITE…WVAGWHTNLN (65 aa). The 165-residue stretch at 122-286 folds into the MurNAc-LAA domain; sequence IVLDPGHGGS…VEQAIVDGLK (165 aa). Positions 123-147 are disordered; sequence VLDPGHGGSDQGASSSTPSKSLEKN. The span at 133–142 shows a compositional bias: polar residues; that stretch reads QGASSSTPSK.

It belongs to the N-acetylmuramoyl-L-alanine amidase 3 family.

It is found in the secreted. In terms of biological role, probably involved in cell-wall metabolism. This Staphylococcus epidermidis (strain ATCC 35984 / DSM 28319 / BCRC 17069 / CCUG 31568 / BM 3577 / RP62A) protein is Probable cell wall amidase LytH (lytH).